A 299-amino-acid chain; its full sequence is Lathosterol oxidase (299 aa).

The next 3 membrane-spanning stretches (helical) occupy residues 32–52, 79–99, and 117–137; these read ISLL…CATL, FTVK…LLEL, and IHLM…IYWI. Positions 124–252 constitute a Fatty acid hydroxylase domain; sequence VSFLFFTDML…YFTLWDRIGG (129 aa). The short motif at 138 to 143 is the Histidine box-1 element; that stretch reads HRGLHH. The short motif at 151–155 is the Histidine box-2 element; that stretch reads HKPHH. A helical membrane pass occupies residues 186–206; the sequence is VFPLHKVVYLGLYVLVNVWTI. Residues 228-233 carry the Histidine box-3 motif; that stretch reads HHTDHH. A Phosphoserine modification is found at Ser-253. The disordered stretch occupies residues 280 to 299; that stretch reads FAENGCKGKKVGNGEFTKNK.

It belongs to the sterol desaturase family. Fe cation is required as a cofactor.

It localises to the endoplasmic reticulum membrane. The catalysed reaction is a Delta(7)-sterol + 2 Fe(II)-[cytochrome b5] + O2 + 2 H(+) = a Delta(5),Delta(7)-sterol + 2 Fe(III)-[cytochrome b5] + 2 H2O. It catalyses the reaction lathosterol + 2 Fe(II)-[cytochrome b5] + O2 + 2 H(+) = 7-dehydrocholesterol + 2 Fe(III)-[cytochrome b5] + 2 H2O. It carries out the reaction 5alpha-cholesta-7,24-dien-3beta-ol + 2 Fe(II)-[cytochrome b5] + O2 + 2 H(+) = 7-dehydrodesmosterol + 2 Fe(III)-[cytochrome b5] + 2 H2O. Its pathway is steroid biosynthesis; cholesterol biosynthesis. Catalyzes the penultimate step of the biosynthesis of cholesterol, the dehydrogenation of lathosterol into 7-dehydrocholesterol (7-DHC). Cholesterol is the major sterol component in mammalian membranes and a precursor for bile acid and steroid hormone synthesis. In addition to its essential role in cholesterol biosynthesis, it also indirectly regulates ferroptosis through the production of 7-DHC. By diverting the spread of damage caused by peroxyl radicals from the phospholipid components to its sterol nucleus, 7-DHC prevents this form of cell death. This is Lathosterol oxidase from Mus musculus (Mouse).